A 93-amino-acid chain; its full sequence is MAKRTKKVGIVGKYGTRYGASIRKQIKKMEVSQHSKYFCEFCGKYGVKRKAVGIWGCKDCGKVKAGGAYTMNTASAVTVRSHTIRRLREQIEG.

Residues 39–60 form a C4-type zinc finger; the sequence is CEFCGKYGVKRKAVGIWGCKDC.

This sequence belongs to the eukaryotic ribosomal protein eL43 family.

This chain is Large ribosomal subunit protein eL43 (RPL37A), found in Brassica rapa subsp. rapa (Turnip).